Consider the following 96-residue polypeptide: Integration host factor subunit alpha (96 aa).

This sequence belongs to the bacterial histone-like protein family. As to quaternary structure, heterodimer of an alpha and a beta chain.

Its function is as follows. This protein is one of the two subunits of integration host factor, a specific DNA-binding protein that functions in genetic recombination as well as in transcriptional and translational control. The sequence is that of Integration host factor subunit alpha from Haemophilus influenzae (strain 86-028NP).